The chain runs to 211 residues: MMFSFIVHVFISLFAVSNPIGNVPIFLTLTEGYTAAERKAIARKAAILSFFILAAFLVFGHLIFKLFDINIHALRVAGGIFIFGIAYNLLNAKESHVQSLHHDEHKESKEKADISVTPLSIPIIAGPGTIATVMSLSAGHSGIGHYAAVMIGIAAVIALTFLFFHYSAFISSKLGKTEMNVITRLMGLILAVVAVGMIGAGLKGMFPVLTS.

6 helical membrane-spanning segments follow: residues 1 to 21 (MMFS…NPIG), 47 to 67 (ILSF…FKLF), 69 to 89 (INIH…AYNL), 114 to 134 (ISVT…ATVM), 150 to 170 (MIGI…SAFI), and 188 to 208 (LILA…MFPV).

This sequence belongs to the UPF0056 (MarC) family.

The protein localises to the cell membrane. In Bacillus subtilis (strain 168), this protein is UPF0056 membrane protein YvbG (yvbG).